The following is a 254-amino-acid chain: UPF0246 protein Fphi_1075 (254 aa).

It belongs to the UPF0246 family.

In Francisella philomiragia subsp. philomiragia (strain ATCC 25017 / CCUG 19701 / FSC 153 / O#319-036), this protein is UPF0246 protein Fphi_1075.